The following is a 263-amino-acid chain: 3-methyl-2-oxobutanoate hydroxymethyltransferase (263 aa).

Mg(2+) is bound by residues D45 and D84. 3-methyl-2-oxobutanoate is bound by residues 45 to 46 (DS), D84, and K112. E114 is a Mg(2+) binding site. The active-site Proton acceptor is the E180.

It belongs to the PanB family. As to quaternary structure, homodecamer; pentamer of dimers. Mg(2+) is required as a cofactor.

It is found in the cytoplasm. The enzyme catalyses 3-methyl-2-oxobutanoate + (6R)-5,10-methylene-5,6,7,8-tetrahydrofolate + H2O = 2-dehydropantoate + (6S)-5,6,7,8-tetrahydrofolate. Its pathway is cofactor biosynthesis; (R)-pantothenate biosynthesis; (R)-pantoate from 3-methyl-2-oxobutanoate: step 1/2. Catalyzes the reversible reaction in which hydroxymethyl group from 5,10-methylenetetrahydrofolate is transferred onto alpha-ketoisovalerate to form ketopantoate. The polypeptide is 3-methyl-2-oxobutanoate hydroxymethyltransferase (Citrobacter koseri (strain ATCC BAA-895 / CDC 4225-83 / SGSC4696)).